The following is a 259-amino-acid chain: Methyltransferase sdnD (259 aa).

It belongs to the FkbM methyltransferase family.

Its pathway is antibiotic biosynthesis. In terms of biological role, methyltransferase; part of the gene cluster that mediates the biosynthesis of sordarin and hypoxysordarin, glycoside antibiotics with a unique tetracyclic diterpene aglycone structure. First, the geranylgeranyl diphosphate synthase sdnC constructs GGDP from farnesyl diphosphate and isopentenyl diphosphate. The diterpene cyclase sdnA then catalyzes the cyclization of GGDP to afford cycloaraneosene. Cycloaraneosene is then hydroxylated four times by the putative cytochrome P450 monooxygenases sdnB, sdnE, sdnF and sdnH to give a hydroxylated cycloaraneosene derivative such as cycloaraneosene-8,9,13,19-tetraol. Although the order of the hydroxylations is unclear, at least C8, C9 and C13 of the cycloaraneosene skeleton are hydroxylated before the sordaricin formation. Dehydration of the 13-hydroxy group of the hydroxylated cycloaraneosene derivative might be catalyzed by an unassigned hypothetical protein such as sdnG and sdnP to construct the cyclopentadiene moiety. The FAD-dependent oxidoreductase sdnN is proposed to catalyze the oxidation at C9 of the hydroxylated cycloaraneosene derivative and also catalyze the Baeyer-Villiger oxidation to give the lactone intermediate. The presumed lactone intermediate would be hydrolyzed to give an acrolein moiety and a carboxylate moiety. Then, [4+2]cycloaddition would occur between the acrolein moiety and the cyclopentadiene moiety to give sordaricin. SdnN might also be involved in the [4+2]cycloaddition after the hypothesized oxidation to accommodate the oxidized product and prompt the [4+2]cycloaddition. GDP-6-deoxy-D-altrose may be biosynthesized from GDP-D-mannose by the putative GDP-mannose-4,6-dehydratase sdnI and the short-chain dehydrogenase sdnK. The glycosyltransferase sdnJ catalyzes the attachment of 6-deoxy-D-altrose onto the 19-hydroxy group of sordaricin to give 4'-O-demethylsordarin. The methyltransferase sdnD would complete the biosynthesis of sordarin. Sordarin can be further modified into hypoxysordarin. The unique acyl chain at the 3'-hydroxy group of hypoxysordarin would be constructed by an iterative type I PKS sdnO and the trans-acting polyketide methyltransferase sdnL. SdnL would be responsible for the introduction of an alpha-methyl group of the polyketide chain. Alternatively, the beta-lactamase-like protein sdnR might be responsible for the cleavage and transfer of the polyketide chain from the PKS sdnO to sordarin. Two putative cytochrome P450 monooxygenases, sdnQ and sdnT, might catalyze the epoxidations of the polyketide chain to complete the biosynthesis of hypoxysordarin. Transcriptional regulators sdnM and sdnS are presumably encoded for the transcriptional regulation of the expression of the sdn gene cluster. The protein is Methyltransferase sdnD of Sordaria araneosa (Pleurage araneosa).